Reading from the N-terminus, the 283-residue chain is Diaminopimelate epimerase (283 aa).

Positions 13, 45, and 65 each coordinate substrate. The active-site Proton donor is the Cys-74. Residues 75–76 (GN), Asn-156, Asn-190, and 208–209 (ER) contribute to the substrate site. The Proton acceptor role is filled by Cys-217. 218–219 (GS) contributes to the substrate binding site.

This sequence belongs to the diaminopimelate epimerase family. Homodimer.

Its subcellular location is the cytoplasm. It carries out the reaction (2S,6S)-2,6-diaminopimelate = meso-2,6-diaminopimelate. Its pathway is amino-acid biosynthesis; L-lysine biosynthesis via DAP pathway; DL-2,6-diaminopimelate from LL-2,6-diaminopimelate: step 1/1. Catalyzes the stereoinversion of LL-2,6-diaminopimelate (L,L-DAP) to meso-diaminopimelate (meso-DAP), a precursor of L-lysine and an essential component of the bacterial peptidoglycan. The chain is Diaminopimelate epimerase from Bartonella quintana (strain Toulouse) (Rochalimaea quintana).